We begin with the raw amino-acid sequence, 173 residues long: MSENTTDNAALGQENVPAMPLAINLQYTKDLSFEVPAGASIFATLRSAPQISVNIDVQANRLEEDQAVYEVALAVRAEAAEPPAQEGGQAGRTVFIAELTYAAVVTLNNPPQELIEPILLVEVPRLIFPYVRSIVSDVTRDGGFPPVVLQPIDFVALWQAKRAQQFPEPAGEA.

This sequence belongs to the SecB family. As to quaternary structure, homotetramer, a dimer of dimers. One homotetramer interacts with 1 SecA dimer.

Its subcellular location is the cytoplasm. Functionally, one of the proteins required for the normal export of preproteins out of the cell cytoplasm. It is a molecular chaperone that binds to a subset of precursor proteins, maintaining them in a translocation-competent state. It also specifically binds to its receptor SecA. This Gluconobacter oxydans (strain 621H) (Gluconobacter suboxydans) protein is Protein-export protein SecB 1.